Here is a 376-residue protein sequence, read N- to C-terminus: 26S proteasome non-ATPase regulatory subunit 13 (376 aa).

One can recognise a PCI domain in the interval 171 to 338; sequence SYYKDALRFL…KRVHMTWVQP (168 aa).

This sequence belongs to the proteasome subunit S11 family. Component of the 19S proteasome regulatory particle complex. The 26S proteasome consists of a 20S core particle (CP) and two 19S regulatory subunits (RP). The regulatory particle is made of a lid composed of 9 subunits including PSMD13, a base containing 6 ATPases and few additional components.

Functionally, component of the 26S proteasome, a multiprotein complex involved in the ATP-dependent degradation of ubiquitinated proteins. This complex plays a key role in the maintenance of protein homeostasis by removing misfolded or damaged proteins, which could impair cellular functions, and by removing proteins whose functions are no longer required. Therefore, the proteasome participates in numerous cellular processes, including cell cycle progression, apoptosis, or DNA damage repair. This Bos taurus (Bovine) protein is 26S proteasome non-ATPase regulatory subunit 13 (PSMD13).